The sequence spans 544 residues: CTP synthase (544 aa).

The interval 1–265 is amidoligase domain; the sequence is MARFIFITGG…DKAVLSAFGL (265 aa). A CTP-binding site is contributed by S13. S13 is a UTP binding site. Position 14 to 19 (14 to 19) interacts with ATP; the sequence is SLGKGL. Y54 contributes to the L-glutamine binding site. D71 contributes to the ATP binding site. Mg(2+)-binding residues include D71 and E139. CTP contacts are provided by residues 146–148, 186–191, and K222; these read DIE and KTKPTQ. UTP-binding positions include 186–191 and K222; that span reads KTKPTQ. Positions 291-543 constitute a Glutamine amidotransferase type-1 domain; sequence TIGVVGKYVG…VAAALKQSRL (253 aa). An L-glutamine-binding site is contributed by G355. Residue C382 is the Nucleophile; for glutamine hydrolysis of the active site. L-glutamine is bound by residues 383–386, E406, and R471; that span reads LGMQ. Residues H516 and E518 contribute to the active site.

It belongs to the CTP synthase family. Homotetramer.

The catalysed reaction is UTP + L-glutamine + ATP + H2O = CTP + L-glutamate + ADP + phosphate + 2 H(+). The enzyme catalyses L-glutamine + H2O = L-glutamate + NH4(+). It catalyses the reaction UTP + NH4(+) + ATP = CTP + ADP + phosphate + 2 H(+). It participates in pyrimidine metabolism; CTP biosynthesis via de novo pathway; CTP from UDP: step 2/2. Its activity is regulated as follows. Allosterically activated by GTP, when glutamine is the substrate; GTP has no effect on the reaction when ammonia is the substrate. The allosteric effector GTP functions by stabilizing the protein conformation that binds the tetrahedral intermediate(s) formed during glutamine hydrolysis. Inhibited by the product CTP, via allosteric rather than competitive inhibition. In terms of biological role, catalyzes the ATP-dependent amination of UTP to CTP with either L-glutamine or ammonia as the source of nitrogen. Regulates intracellular CTP levels through interactions with the four ribonucleotide triphosphates. In Zymomonas mobilis subsp. mobilis (strain ATCC 31821 / ZM4 / CP4), this protein is CTP synthase.